Consider the following 144-residue polypeptide: Nucleoside diphosphate kinase (144 aa).

Residues K9, F57, R85, T91, R102, and N112 each contribute to the ATP site. The active-site Pros-phosphohistidine intermediate is H120.

This sequence belongs to the NDK family. In terms of assembly, homotetramer. Mg(2+) is required as a cofactor.

Its subcellular location is the cytoplasm. It catalyses the reaction a 2'-deoxyribonucleoside 5'-diphosphate + ATP = a 2'-deoxyribonucleoside 5'-triphosphate + ADP. It carries out the reaction a ribonucleoside 5'-diphosphate + ATP = a ribonucleoside 5'-triphosphate + ADP. Functionally, major role in the synthesis of nucleoside triphosphates other than ATP. The ATP gamma phosphate is transferred to the NDP beta phosphate via a ping-pong mechanism, using a phosphorylated active-site intermediate. This Streptococcus uberis (strain ATCC BAA-854 / 0140J) protein is Nucleoside diphosphate kinase.